The following is a 213-amino-acid chain: Putative thymidylate kinase 251L (213 aa).

Gly21–Ser28 provides a ligand contact to ATP.

This sequence belongs to the thymidylate kinase family.

It catalyses the reaction dTMP + ATP = dTDP + ADP. The protein operates within pyrimidine metabolism; dTTP biosynthesis. In terms of biological role, catalyzes the conversion of dTMP to dTDP. The sequence is that of Putative thymidylate kinase 251L from Acheta domesticus (House cricket).